A 262-amino-acid chain; its full sequence is Homeobox-leucine zipper protein HOX24 (262 aa).

Disordered regions lie at residues A44 to R68 and L162 to M189. The segment covering G46–G62 has biased composition (gly residues). The segment at residues G61–Q122 is a DNA-binding region (homeobox). Residues K121–R165 are leucine-zipper.

It belongs to the HD-ZIP homeobox family. Class I subfamily. As to expression, expressed in roots and panicles.

It is found in the nucleus. Probable transcription factor. The chain is Homeobox-leucine zipper protein HOX24 (HOX24) from Oryza sativa subsp. indica (Rice).